Consider the following 399-residue polypeptide: P2X purinoceptor 1 (399 aa).

Residues 1–28 (MARRLQDELSAFFFEYDTPRMVLVRNKK) lie on the Cytoplasmic side of the membrane. Residues 29–50 (VGVIFRLIQLVVLVYVIGWVFV) form a helical membrane-spanning segment. The Extracellular segment spans residues 51 to 338 (YEKGYQTSSD…IPTMTTIGSG (288 aa)). 3 residues coordinate CTP: lysine 68, lysine 70, and lysine 140. Residue lysine 70 coordinates ATP. Disulfide bonds link cysteine 117-cysteine 165, cysteine 126-cysteine 149, and cysteine 132-cysteine 159. N-linked (GlcNAc...) asparagine glycosylation is found at asparagine 153 and asparagine 184. Residue threonine 186 participates in CTP binding. ATP is bound at residue threonine 186. N-linked (GlcNAc...) asparagine glycosylation is present at asparagine 210. Intrachain disulfides connect cysteine 217–cysteine 227 and cysteine 261–cysteine 270. ATP is bound by residues serine 286, asparagine 290, and arginine 292. CTP is bound by residues asparagine 290 and arginine 292. Asparagine 300 carries N-linked (GlcNAc...) asparagine glycosylation. A CTP-binding site is contributed by lysine 309. Lysine 309 is a binding site for ATP. Positions 331 to 338 (TMTTIGSG) are pore-forming motif. The chain crosses the membrane as a helical span at residues 339 to 358 (IGIFGVATVLCDLLLLHILP). Residues 359–399 (KRHYYKQKKFKYAEDMGPGEGEHDPVATSSTLGLQENMRTS) are Cytoplasmic-facing. Residues 374–399 (MGPGEGEHDPVATSSTLGLQENMRTS) are disordered. Residues 385–399 (ATSSTLGLQENMRTS) show a composition bias toward polar residues. 2 positions are modified to phosphoserine: serine 387 and serine 388. A Phosphothreonine modification is found at threonine 389.

Belongs to the P2X receptor family. Functional P2XRs are organized as homomeric and heteromeric trimers. Homotrimer. Forms heterodimer with P2RX2. Forms heterodimer with P2RX4. Forms heterodimer with P2RX5. In terms of tissue distribution, high levels in vas deferens and urinary bladder. Lower extent in spinal cord, coeliac ganglion, lung and spleen (probably in the smooth muscle part of both organs).

It localises to the cell membrane. The catalysed reaction is Ca(2+)(in) = Ca(2+)(out). It catalyses the reaction K(+)(in) = K(+)(out). It carries out the reaction Na(+)(in) = Na(+)(out). With respect to regulation, activated by low concentrations of ATP (&lt;1 uM). Undergoes rapid desensitisation. Sensitives to the ATP agonist:alpha/beta-methylene-ATP. Modulated by cholesterol. In terms of biological role, ATP-gated nonselective transmembrane cation channel permeable to potassium, sodium and with relatively high calcium permeability. Furthermore, CTP functions as a weak affinity agonist for P2RX1. Plays a role a role in urogenital, immune and cardiovascular function. Specifically, plays an important role in neurogenic contraction of smooth muscle of the vas deferens, and therefore is essential for normal male reproductive function. In addition, contributes to smooth muscle contractions of the urinary bladder. On platelets, contributes to platelet activation and aggregation and thereby, also to thrombosis. On neutrophils, it is involved in chemotaxis and in mitigating the activation of circulating cells. In Rattus norvegicus (Rat), this protein is P2X purinoceptor 1 (P2rx1).